Consider the following 84-residue polypeptide: Acyl-CoA-binding protein (84 aa).

One can recognise an ACB domain in the interval 1–84 (MTTFEEAAQK…LYEQLATKYA (84 aa)). Residues K12, 27–31 (YGLYK), K53, and Y72 each bind an acyl-CoA.

It belongs to the ACBP family. In terms of assembly, interacts with dhkA.

In terms of biological role, binds to acyl-CoA. Processed into the SDF-2 (spore differentiation factor 2) a peptide which triggers sporulation. SDF-2 appears to stimulate prestalk cells to release additional SDF-2 by acting through a signal transduction pathway that also involves dhkA, regA and PKA. Induces encapsulation of prespore cells in a dhkA-dependent manner. GABA induces the release of acbA from prespore cells and induces the exposure of tagC on the surface of prestalk cells where it can convert acbA to SDF-2. Glutamate acts as a competitive inhibitor and is also able to inhibit induction of sporulation by SDF-2. The protein is Acyl-CoA-binding protein (acbA) of Dictyostelium discoideum (Social amoeba).